Reading from the N-terminus, the 532-residue chain is Aspartate--tRNA ligase 1, cytoplasmic (532 aa).

Residues 7 to 41 (LEECGEKISKKESKKRAAKLEKLLRKQEREEATSS) adopt a coiled-coil conformation. Positions 31–58 (RKQEREEATSSSLSLEEEDESCSSNYGD) are disordered. The OB DNA-binding region spans 88-169 (VSIRGRLHKN…QVEIHVRKMY (82 aa)). Glutamate 260 contributes to the L-aspartate binding site. Residues 282–285 (QLHK) form an aspartate region. Arginine 304 provides a ligand contact to L-aspartate. Residues 304–306 (RAE), 312–314 (RHL), and glutamate 455 each bind ATP. Positions 455 and 458 each coordinate Mg(2+). L-aspartate contacts are provided by serine 458 and arginine 462. Residue 503 to 506 (GLER) participates in ATP binding.

This sequence belongs to the class-II aminoacyl-tRNA synthetase family. Type 2 subfamily.

Its subcellular location is the cytoplasm. It is found in the cytosol. The catalysed reaction is tRNA(Asp) + L-aspartate + ATP = L-aspartyl-tRNA(Asp) + AMP + diphosphate. Functionally, catalyzes the specific attachment of an amino acid to its cognate tRNA in a 2 step reaction: the amino acid (AA) is first activated by ATP to form AA-AMP and then transferred to the acceptor end of the tRNA. The polypeptide is Aspartate--tRNA ligase 1, cytoplasmic (Arabidopsis thaliana (Mouse-ear cress)).